Reading from the N-terminus, the 306-residue chain is Ribonuclease Z (306 aa).

Positions 63, 65, 67, 68, 140, 211, and 269 each coordinate Zn(2+). The Proton acceptor role is filled by aspartate 67.

It belongs to the RNase Z family. Homodimer. The cofactor is Zn(2+).

The enzyme catalyses Endonucleolytic cleavage of RNA, removing extra 3' nucleotides from tRNA precursor, generating 3' termini of tRNAs. A 3'-hydroxy group is left at the tRNA terminus and a 5'-phosphoryl group is left at the trailer molecule.. Its function is as follows. Zinc phosphodiesterase, which displays some tRNA 3'-processing endonuclease activity. Probably involved in tRNA maturation, by removing a 3'-trailer from precursor tRNA. The protein is Ribonuclease Z of Listeria monocytogenes serotype 4a (strain HCC23).